A 377-amino-acid polypeptide reads, in one-letter code: F-box protein At4g00755 (377 aa).

The F-box domain occupies 7–47; it reads LDTDTSLSILSCLDDPSDIVRASAVSRSWRQFVVKYSLSKN.

The chain is F-box protein At4g00755 from Arabidopsis thaliana (Mouse-ear cress).